The sequence spans 499 residues: Putative sodium-dependent excitatory amino acid transporter glt-4 (499 aa).

The Cytoplasmic segment spans residues 1–7 (MAKLSKE). A run of 3 helical transmembrane segments spans residues 8–28 (NLLLLFTVLGVVVGIGLGFSL), 50–70 (FVQMLKMLILPMIMSSIITSL), and 87–107 (IYYTLTTFFAVFLGIVLVSVI). Asparagine 165 carries N-linked (GlcNAc...) asparagine glycosylation. The next 3 membrane-spanning stretches (helical) occupy residues 194–217 (VSDGMNILGLVVFSVALGIVIGVI), 227–254 (FFKSLEACSMKLIGWVIIYSPVGITFLI), and 276–297 (ITVILGLLIHAFVVIPLLCVVL). The segment at residues 303-333 (IKFVGGMAQALLTALATSSSSATLPLSIKCC) is an intramembrane region (discontinuously helical). 320 to 322 (SSS) is a binding site for L-aspartate. The helical transmembrane segment at 343–369 (VTRFVLPLGATINMDGTALYEAVAAIY) threads the bilayer. Na(+) contacts are provided by glycine 351, threonine 353, and asparagine 355. Residues threonine 359, 400–404 (IPQAG), aspartate 433, and asparagine 440 each bind L-aspartate. The segment at residues 383-416 (VVLVSLTATLASIGAAGIPQAGIVTMIMVLIAIG) is an intramembrane region (discontinuously helical). Residues 430-451 (FMLDRLRTTVNVHGDSIATAVI) traverse the membrane as a helical segment. The Na(+) site is built by asparagine 440 and aspartate 444.

It belongs to the dicarboxylate/amino acid:cation symporter (DAACS) (TC 2.A.23) family.

Its subcellular location is the cell membrane. Its function is as follows. Sodium-dependent, high-affinity amino acid transporter that mediates the uptake of L-glutamate and also L-aspartate and D-aspartate. Functions as a symporter that transports one amino acid molecule together with two or three Na(+) ions and one proton, in parallel with the counter-transport of one K(+) ion. Mediates Cl(-) flux that is not coupled to amino acid transport; this avoids the accumulation of negative charges due to aspartate and Na(+) symport. The chain is Putative sodium-dependent excitatory amino acid transporter glt-4 (glt-4) from Caenorhabditis elegans.